The primary structure comprises 162 residues: Inorganic pyrophosphatase (162 aa).

A Mg(2+)-binding site is contributed by E8. Substrate is bound by residues K16, R30, and Y42. Mg(2+)-binding residues include D52, D57, D84, and D89. D89 serves as the catalytic Proton acceptor. Position 126 (Y126) interacts with substrate.

Belongs to the PPase family. Homohexamer. Requires Mg(2+) as cofactor.

It is found in the cytoplasm. The catalysed reaction is diphosphate + H2O = 2 phosphate + H(+). Functionally, catalyzes the hydrolysis of inorganic pyrophosphate (PPi) forming two phosphate ions. The polypeptide is Inorganic pyrophosphatase (Mycobacterium leprae (strain TN)).